The following is a 391-amino-acid chain: Putative gustatory receptor 36b (391 aa).

The Cytoplasmic portion of the chain corresponds to methionine 1 to tryptophan 4. A helical transmembrane segment spans residues valine 5–glutamate 25. Over phenylalanine 26 to cysteine 39 the chain is Extracellular. The helical transmembrane segment at threonine 40–alanine 60 threads the bilayer. Over histidine 61 to leucine 74 the chain is Cytoplasmic. Residues histidine 75–leucine 95 traverse the membrane as a helical segment. At asparagine 96 to tryptophan 127 the chain is on the extracellular side. Residues glycine 128 to valine 148 traverse the membrane as a helical segment. The Cytoplasmic segment spans residues aspartate 149–lysine 165. A helical membrane pass occupies residues leucine 166–isoleucine 186. The Extracellular portion of the chain corresponds to arginine 187–leucine 284. The chain crosses the membrane as a helical span at residues serine 285–valine 305. Residues asparagine 306–proline 363 are Cytoplasmic-facing. The chain crosses the membrane as a helical span at residues isoleucine 364–isoleucine 384. Residues glutamine 385–phenylalanine 391 lie on the Extracellular side of the membrane.

The protein belongs to the insect chemoreceptor superfamily. Gustatory receptor (GR) family. Gr22e subfamily. Expressed in neurons of the terminal external chemosensory organ of larvae.

Its subcellular location is the cell membrane. Its function is as follows. Probable gustatory receptor which mediates acceptance or avoidance behavior, depending on its substrates. The protein is Putative gustatory receptor 36b (Gr36b) of Drosophila melanogaster (Fruit fly).